A 37-amino-acid polypeptide reads, in one-letter code: Alpha-conotoxin-like Kn1.2 (37 aa).

Over residues 1–15 the composition is skewed to basic and acidic residues; the sequence is ESDGAHAKARADKPA. Residues 1–22 constitute a propeptide that is removed on maturation; sequence ESDGAHAKARADKPARSATNRQ. The disordered stretch occupies residues 1–23; it reads ESDGAHAKARADKPARSATNRQP. Disulfide bonds link cysteine 25-cysteine 31 and cysteine 26-cysteine 36. Cysteine 36 carries the post-translational modification Cysteine amide.

The protein belongs to the conotoxin A superfamily. In terms of tissue distribution, expressed by the venom duct.

It is found in the secreted. Functionally, alpha-conotoxins act on postsynaptic membranes, they bind to the nicotinic acetylcholine receptors (nAChR) and thus inhibit them. This toxin inhibits high voltage-activated (HVA) calcium channel currents in rat DRG neurons (13% inhibition at 1 uM toxin) probably by activating GABA(B) receptors (GABBR1 and/or GABBR2). The protein is Alpha-conotoxin-like Kn1.2 of Conus kinoshitai (Kinoshita's cone).